Consider the following 346-residue polypeptide: Biotin synthase (346 aa).

The Radical SAM core domain occupies 38-256; that stretch reads RQVQVSTLLS…IAVARIMMPT (219 aa). [4Fe-4S] cluster contacts are provided by Cys-53, Cys-57, and Cys-60. [2Fe-2S] cluster is bound by residues Cys-97, Cys-128, Cys-188, and Arg-260.

It belongs to the radical SAM superfamily. Biotin synthase family. Homodimer. [4Fe-4S] cluster serves as cofactor. Requires [2Fe-2S] cluster as cofactor.

The enzyme catalyses (4R,5S)-dethiobiotin + (sulfur carrier)-SH + 2 reduced [2Fe-2S]-[ferredoxin] + 2 S-adenosyl-L-methionine = (sulfur carrier)-H + biotin + 2 5'-deoxyadenosine + 2 L-methionine + 2 oxidized [2Fe-2S]-[ferredoxin]. It functions in the pathway cofactor biosynthesis; biotin biosynthesis; biotin from 7,8-diaminononanoate: step 2/2. Functionally, catalyzes the conversion of dethiobiotin (DTB) to biotin by the insertion of a sulfur atom into dethiobiotin via a radical-based mechanism. This Shigella boydii serotype 18 (strain CDC 3083-94 / BS512) protein is Biotin synthase.